We begin with the raw amino-acid sequence, 389 residues long: Anhydro-N-acetylmuramic acid kinase (389 aa).

An ATP-binding site is contributed by Gly-11–Asp-18.

This sequence belongs to the anhydro-N-acetylmuramic acid kinase family.

The catalysed reaction is 1,6-anhydro-N-acetyl-beta-muramate + ATP + H2O = N-acetyl-D-muramate 6-phosphate + ADP + H(+). It functions in the pathway amino-sugar metabolism; 1,6-anhydro-N-acetylmuramate degradation. It participates in cell wall biogenesis; peptidoglycan recycling. Its function is as follows. Catalyzes the specific phosphorylation of 1,6-anhydro-N-acetylmuramic acid (anhMurNAc) with the simultaneous cleavage of the 1,6-anhydro ring, generating MurNAc-6-P. Is required for the utilization of anhMurNAc either imported from the medium or derived from its own cell wall murein, and thus plays a role in cell wall recycling. This chain is Anhydro-N-acetylmuramic acid kinase, found in Albidiferax ferrireducens (strain ATCC BAA-621 / DSM 15236 / T118) (Rhodoferax ferrireducens).